The sequence spans 158 residues: NAD(P)H-quinone oxidoreductase subunit J, chloroplastic (158 aa).

Belongs to the complex I 30 kDa subunit family. NDH is composed of at least 16 different subunits, 5 of which are encoded in the nucleus.

It is found in the plastid. Its subcellular location is the chloroplast thylakoid membrane. It carries out the reaction a plastoquinone + NADH + (n+1) H(+)(in) = a plastoquinol + NAD(+) + n H(+)(out). The enzyme catalyses a plastoquinone + NADPH + (n+1) H(+)(in) = a plastoquinol + NADP(+) + n H(+)(out). In terms of biological role, NDH shuttles electrons from NAD(P)H:plastoquinone, via FMN and iron-sulfur (Fe-S) centers, to quinones in the photosynthetic chain and possibly in a chloroplast respiratory chain. The immediate electron acceptor for the enzyme in this species is believed to be plastoquinone. Couples the redox reaction to proton translocation, and thus conserves the redox energy in a proton gradient. The protein is NAD(P)H-quinone oxidoreductase subunit J, chloroplastic of Acorus calamus var. americanus (American sweet flag).